The primary structure comprises 94 residues: MPSVVPQERQQVTRKHYPNYKVIVLNDDFNTFQHVAACLMKYIPNMTSDRAWELTNQVHYEGQAIVWVGPQEQAELYHEQLLRAGLTMAPLEPE.

The protein belongs to the ClpS family. In terms of assembly, binds to the N-terminal domain of the chaperone ClpA.

Functionally, involved in the modulation of the specificity of the ClpAP-mediated ATP-dependent protein degradation. The protein is ATP-dependent Clp protease adapter protein ClpS of Thermosynechococcus vestitus (strain NIES-2133 / IAM M-273 / BP-1).